The following is a 136-amino-acid chain: MLQPKRTKFRKVHKGRNRGIAAGTEVSFGTFGLKAVGRGRLTARQIEAARRAMTRAVKRQGKIWIRVFPDKPITEKPLEVRMGKGKGNVEYWVALIQPGKVLYEMDGVSEEIARNAFALAAAKLPIKTTFVTKTVM.

This sequence belongs to the universal ribosomal protein uL16 family. As to quaternary structure, part of the 50S ribosomal subunit.

Its function is as follows. Binds 23S rRNA and is also seen to make contacts with the A and possibly P site tRNAs. This chain is Large ribosomal subunit protein uL16, found in Pasteurella multocida (strain Pm70).